The sequence spans 440 residues: Proline--tRNA ligase (440 aa).

It belongs to the class-II aminoacyl-tRNA synthetase family. ProS type 2 subfamily. In terms of assembly, homodimer.

Its subcellular location is the cytoplasm. It catalyses the reaction tRNA(Pro) + L-proline + ATP = L-prolyl-tRNA(Pro) + AMP + diphosphate. Functionally, catalyzes the attachment of proline to tRNA(Pro) in a two-step reaction: proline is first activated by ATP to form Pro-AMP and then transferred to the acceptor end of tRNA(Pro). The chain is Proline--tRNA ligase from Agrobacterium fabrum (strain C58 / ATCC 33970) (Agrobacterium tumefaciens (strain C58)).